The sequence spans 351 residues: DNA nickase (351 aa).

Residues H241, E245, and H303 each contribute to the Fe cation site.

Functionally, acts as a DNA nickase. In Nostoc sp. (strain PCC 7120 / SAG 25.82 / UTEX 2576), this protein is DNA nickase.